We begin with the raw amino-acid sequence, 211 residues long: MQLKNPILGLCQQATFMLSAAKVDQCPDDEGFEVAFAGRSNAGKSSALNTLTHASLARTSKTPGRTQLLNFFGLDEDRRLVDLPGYGYAKVPIPLKLHWQRHLEAYLGSRESLKGLILMMDIRHPMTDFDLLMLDWAIASNMPMHILLTKADKLTYGAAKNTLLKVQTEIRKGWGDAVSIQLFSAPKRMGLEEAYTVLADWMELEDKAPAE.

In terms of domain architecture, EngB-type G spans 30–204; the sequence is EGFEVAFAGR…YTVLADWMEL (175 aa). GTP is bound by residues 38-45, 64-68, 82-85, 149-152, and 182-185; these read GRSNAGKS, GRTQL, DLPG, TKAD, and LFSA. S45 and T66 together coordinate Mg(2+).

The protein belongs to the TRAFAC class TrmE-Era-EngA-EngB-Septin-like GTPase superfamily. EngB GTPase family. Mg(2+) is required as a cofactor.

In terms of biological role, necessary for normal cell division and for the maintenance of normal septation. The sequence is that of Probable GTP-binding protein EngB from Pseudomonas savastanoi pv. phaseolicola (strain 1448A / Race 6) (Pseudomonas syringae pv. phaseolicola (strain 1448A / Race 6)).